The following is a 499-amino-acid chain: Apolipoprotein N-acyltransferase (499 aa).

Transmembrane regions (helical) follow at residues 17-37 (VLAG…ALAL), 38-58 (LWSA…AVLL), 84-104 (ASIW…WAWL), 131-151 (IWGL…GVGG), 163-183 (LARW…GWWL), and 198-218 (RSLL…WSLL). Residues 232 to 458 (WQPAIPTRSK…EGVGLADLHF (227 aa)) form the CN hydrolase domain. Glutamate 273 serves as the catalytic Proton acceptor. Lysine 322 is an active-site residue. Cysteine 370 serves as the catalytic Nucleophile. A helical transmembrane segment spans residues 474–494 (IGLMLFAVVGLGLSRVRSWLI).

It belongs to the CN hydrolase family. Apolipoprotein N-acyltransferase subfamily.

Its subcellular location is the cell inner membrane. It catalyses the reaction N-terminal S-1,2-diacyl-sn-glyceryl-L-cysteinyl-[lipoprotein] + a glycerophospholipid = N-acyl-S-1,2-diacyl-sn-glyceryl-L-cysteinyl-[lipoprotein] + a 2-acyl-sn-glycero-3-phospholipid + H(+). It participates in protein modification; lipoprotein biosynthesis (N-acyl transfer). Catalyzes the phospholipid dependent N-acylation of the N-terminal cysteine of apolipoprotein, the last step in lipoprotein maturation. This is Apolipoprotein N-acyltransferase from Prochlorococcus marinus (strain MIT 9313).